Reading from the N-terminus, the 565-residue chain is Dihydroxy-acid dehydratase (565 aa).

Position 80 (Asp80) interacts with Mg(2+). Residue Cys121 coordinates [2Fe-2S] cluster. Positions 122 and 123 each coordinate Mg(2+). The residue at position 123 (Lys123) is an N6-carboxylysine. [2Fe-2S] cluster is bound at residue Cys194. Glu447 lines the Mg(2+) pocket. Ser473 (proton acceptor) is an active-site residue.

Belongs to the IlvD/Edd family. In terms of assembly, homodimer. [2Fe-2S] cluster serves as cofactor. Requires Mg(2+) as cofactor.

The catalysed reaction is (2R)-2,3-dihydroxy-3-methylbutanoate = 3-methyl-2-oxobutanoate + H2O. The enzyme catalyses (2R,3R)-2,3-dihydroxy-3-methylpentanoate = (S)-3-methyl-2-oxopentanoate + H2O. It functions in the pathway amino-acid biosynthesis; L-isoleucine biosynthesis; L-isoleucine from 2-oxobutanoate: step 3/4. It participates in amino-acid biosynthesis; L-valine biosynthesis; L-valine from pyruvate: step 3/4. Its function is as follows. Functions in the biosynthesis of branched-chain amino acids. Catalyzes the dehydration of (2R,3R)-2,3-dihydroxy-3-methylpentanoate (2,3-dihydroxy-3-methylvalerate) into 2-oxo-3-methylpentanoate (2-oxo-3-methylvalerate) and of (2R)-2,3-dihydroxy-3-methylbutanoate (2,3-dihydroxyisovalerate) into 2-oxo-3-methylbutanoate (2-oxoisovalerate), the penultimate precursor to L-isoleucine and L-valine, respectively. The sequence is that of Dihydroxy-acid dehydratase from Pelodictyon phaeoclathratiforme (strain DSM 5477 / BU-1).